Consider the following 473-residue polypeptide: Cysteine--tRNA ligase (473 aa).

Position 28 (Cys28) interacts with Zn(2+). Positions 30-40 match the 'HIGH' region motif; the sequence is VTVYDLCHLGH. Zn(2+) is bound by residues Cys213, His238, and Glu242. The 'KMSKS' region signature appears at 270–274; that stretch reads KMSKS. Residue Lys273 participates in ATP binding.

The protein belongs to the class-I aminoacyl-tRNA synthetase family. Monomer. Zn(2+) serves as cofactor.

Its subcellular location is the cytoplasm. It carries out the reaction tRNA(Cys) + L-cysteine + ATP = L-cysteinyl-tRNA(Cys) + AMP + diphosphate. The polypeptide is Cysteine--tRNA ligase (Blochmanniella pennsylvanica (strain BPEN)).